The following is a 244-amino-acid chain: Phosphoadenosine 5'-phosphosulfate reductase (244 aa).

Catalysis depends on Cys-239, which acts as the Nucleophile; cysteine thiosulfonate intermediate.

The protein belongs to the PAPS reductase family. CysH subfamily.

It localises to the cytoplasm. It catalyses the reaction [thioredoxin]-disulfide + sulfite + adenosine 3',5'-bisphosphate + 2 H(+) = [thioredoxin]-dithiol + 3'-phosphoadenylyl sulfate. It functions in the pathway sulfur metabolism; hydrogen sulfide biosynthesis; sulfite from sulfate: step 3/3. Functionally, catalyzes the formation of sulfite from phosphoadenosine 5'-phosphosulfate (PAPS) using thioredoxin as an electron donor. This is Phosphoadenosine 5'-phosphosulfate reductase from Shigella flexneri.